A 465-amino-acid chain; its full sequence is tRNA-2-methylthio-N(6)-dimethylallyladenosine synthase (465 aa).

One can recognise an MTTase N-terminal domain in the interval 26–141 (MRAHIITYGC…LPEALKANER (116 aa)). Residues Cys-35, Cys-71, Cys-104, Cys-173, Cys-177, and Cys-180 each coordinate [4Fe-4S] cluster. Residues 159 to 388 (PKGALSAHVT…IEKQKEWSYR (230 aa)) form the Radical SAM core domain. A TRAM domain is found at 391 to 453 (LEWVGKTVEV…PHLLFGEVVG (63 aa)).

This sequence belongs to the methylthiotransferase family. MiaB subfamily. Monomer. The cofactor is [4Fe-4S] cluster.

The protein localises to the cytoplasm. It carries out the reaction N(6)-dimethylallyladenosine(37) in tRNA + (sulfur carrier)-SH + AH2 + 2 S-adenosyl-L-methionine = 2-methylsulfanyl-N(6)-dimethylallyladenosine(37) in tRNA + (sulfur carrier)-H + 5'-deoxyadenosine + L-methionine + A + S-adenosyl-L-homocysteine + 2 H(+). Catalyzes the methylthiolation of N6-(dimethylallyl)adenosine (i(6)A), leading to the formation of 2-methylthio-N6-(dimethylallyl)adenosine (ms(2)i(6)A) at position 37 in tRNAs that read codons beginning with uridine. In Thermus thermophilus (strain ATCC 27634 / DSM 579 / HB8), this protein is tRNA-2-methylthio-N(6)-dimethylallyladenosine synthase.